The following is a 43-amino-acid chain: Protein PsbN (43 aa).

The helical transmembrane segment at 4–24 (ATFVAIFISCLLISFTGYALY) threads the bilayer.

It belongs to the PsbN family.

The protein resides in the plastid. Its subcellular location is the chloroplast thylakoid membrane. Its function is as follows. May play a role in photosystem I and II biogenesis. The polypeptide is Protein PsbN (Marchantia polymorpha (Common liverwort)).